The sequence spans 245 residues: Ribosomal RNA large subunit methyltransferase E (245 aa).

The interval 1–25 (MTKSPIGGNRSGRKLGQKVKKGKLK) is disordered. Residues 11–25 (SGRKLGQKVKKGKLK) are compositionally biased toward basic residues. Residues glycine 81, tryptophan 83, aspartate 104, aspartate 120, and aspartate 144 each contribute to the S-adenosyl-L-methionine site. The Proton acceptor role is filled by lysine 184.

This sequence belongs to the class I-like SAM-binding methyltransferase superfamily. RNA methyltransferase RlmE family.

Its subcellular location is the cytoplasm. It carries out the reaction uridine(2552) in 23S rRNA + S-adenosyl-L-methionine = 2'-O-methyluridine(2552) in 23S rRNA + S-adenosyl-L-homocysteine + H(+). Its function is as follows. Specifically methylates the uridine in position 2552 of 23S rRNA at the 2'-O position of the ribose in the fully assembled 50S ribosomal subunit. The sequence is that of Ribosomal RNA large subunit methyltransferase E from Sinorhizobium fredii (strain NBRC 101917 / NGR234).